Reading from the N-terminus, the 207-residue chain is MREAIIKRAAKELKEGMYVNLGIGLPTLVANEVSGMNIVFQSENGLLGIGAYPLEGGVDADLINAGKETITVVPGASFFNSADSFAMIRGGHIDLAILGGMEVSQNGDLANWMIPKKLIKGMGGAMDLVHGAKKVIVIMEHCNKYGESKVKKECSLPLTGKGVVHQLITDLAVFEFSNNAMELVELQEGVSLDQVKEKTEAEFEVHL.

The active site involves glutamate 43.

Belongs to the 3-oxoacid CoA-transferase subunit B family. As to quaternary structure, heterodimer of a subunit A and a subunit B.

It carries out the reaction a 3-oxo acid + succinyl-CoA = a 3-oxoacyl-CoA + succinate. The protein is Succinyl-CoA:3-ketoacid coenzyme A transferase subunit B (scoB) of Helicobacter pylori (strain J99 / ATCC 700824) (Campylobacter pylori J99).